The primary structure comprises 98 residues: Integration host factor subunit alpha (98 aa).

The disordered stretch occupies residues 49 to 70 (FGNFDLRDKNQRPGRNPKTGED).

The protein belongs to the bacterial histone-like protein family. In terms of assembly, heterodimer of an alpha and a beta chain.

In terms of biological role, this protein is one of the two subunits of integration host factor, a specific DNA-binding protein that functions in genetic recombination as well as in transcriptional and translational control. In Serratia proteamaculans (strain 568), this protein is Integration host factor subunit alpha.